A 262-amino-acid polypeptide reads, in one-letter code: Phosphatase SCO2771 (262 aa).

Its function is as follows. Displays phosphatase activity against p-nitrophenyl phosphate (pNPP) in vitro; however, the physiological substrate is unknown. This Streptomyces coelicolor (strain ATCC BAA-471 / A3(2) / M145) protein is Phosphatase SCO2771.